The chain runs to 243 residues: MNIENYLNETLKEHKLHFTLIDPDEQTPQEAVEIAKQAKKARSDAILVGGSITDQEDLNITVKSIKEEVDLPVILFPGNISGVSKYADALLFMSLLNSTNPYWITGAQALSAPSIKKMGIETIPMGYLIIEPGGTVGWVGDSKPIPRKKSDLAVAYALAAEFLGMRVIYLEAGSGADSHIPVDFIMKVKKLTNLMVIVGGGIKTAQDALEVKEAGADIIITGTVVEETDDTYKKIKELTDVIH.

The Mg(2+) site is built by Asp-22 and Ser-51. Residues 169 to 175 (YLEAGSG), 200 to 201 (GG), and 222 to 223 (GT) each bind sn-glycerol 1-phosphate.

The protein belongs to the GGGP/HepGP synthase family. Group II subfamily. Mg(2+) serves as cofactor.

It is found in the cytoplasm. The enzyme catalyses sn-glycerol 1-phosphate + (2E,6E,10E)-geranylgeranyl diphosphate = sn-3-O-(geranylgeranyl)glycerol 1-phosphate + diphosphate. It participates in membrane lipid metabolism; glycerophospholipid metabolism. Functionally, prenyltransferase that catalyzes the transfer of the geranylgeranyl moiety of geranylgeranyl diphosphate (GGPP) to the C3 hydroxyl of sn-glycerol-1-phosphate (G1P). This reaction is the first ether-bond-formation step in the biosynthesis of archaeal membrane lipids. In Methanosphaera stadtmanae (strain ATCC 43021 / DSM 3091 / JCM 11832 / MCB-3), this protein is Geranylgeranylglyceryl phosphate synthase.